A 425-amino-acid polypeptide reads, in one-letter code: bZIP transcription factor RISBZ2 (425 aa).

Disordered stretches follow at residues 1 to 50 (MERV…GGGG) and 169 to 257 (NSIG…AAHL). Positions 30-50 (QGGGGVASGGGGGVAGGGGGG) are enriched in gly residues. The span at 171-182 (IGGNATPVQNML) shows a compositional bias: polar residues. Over residues 213–222 (SDDDDMEGEA) the composition is skewed to acidic residues. The segment covering 231 to 247 (ADQRLQRRKQSNRESAR) has biased composition (basic and acidic residues). One can recognise a bZIP domain in the interval 232–295 (DQRLQRRKQS…NDAAVDNRVL (64 aa)). The segment at 234–253 (RLQRRKQSNRESARRSRSRK) is basic motif. The leucine-zipper stretch occupies residues 260–274 (LEAQVSQLRVENSSL). The disordered stretch occupies residues 334–354 (MPFNSSPSEATSDAAVPIQDD).

Heterodimer with RISBZ1/BZIP58.

Its subcellular location is the nucleus. Transcriptional activator that binds to the DNA specific sequence 5'-GCCACGT[AC]AG-3' found in the alpha-globulin gene promoter. Does not bind to promoters of other major storage genes such as glutelin, prolamin and albumin. Binds to the DNA specific sequence 5'-TGAGTCA-3' found in seed storage protein gene promoters. The chain is bZIP transcription factor RISBZ2 from Oryza sativa subsp. japonica (Rice).